The following is a 506-amino-acid chain: Maturase K (506 aa).

Belongs to the intron maturase 2 family. MatK subfamily.

The protein resides in the plastid. The protein localises to the chloroplast. Its function is as follows. Usually encoded in the trnK tRNA gene intron. Probably assists in splicing its own and other chloroplast group II introns. The polypeptide is Maturase K (Lathyrus tingitanus (Tangier pea)).